Reading from the N-terminus, the 370-residue chain is Sensor histidine kinase DesK (370 aa).

At 1 to 10 the chain is on the extracellular side; that stretch reads MIKNHFTFQK. A helical transmembrane segment spans residues 11–31; sequence LNGITPYIWTIFFILPFYFIW. At 32–36 the chain is on the cytoplasmic side; that stretch reads KSSST. Residues 37–57 traverse the membrane as a helical segment; it reads FVIIVGIILTLLFFSVYRFAF. Topologically, residues 58-70 are extracellular; the sequence is VSKGWTIYLWGFL. The chain crosses the membrane as a helical span at residues 71–91; sequence LIGISTASITLFSYIYFAFFI. The Cytoplasmic segment spans residues 92-103; that stretch reads AYFIGNIKERVP. The chain crosses the membrane as a helical span at residues 104-124; that stretch reads FHILYYVHLISAAVAANFSLV. At 125 to 128 the chain is on the extracellular side; the sequence is LKKE. Residues 129–149 traverse the membrane as a helical segment; it reads FFLTQIPFVVITLISAILLPF. Topologically, residues 150 to 370 are cytoplasmic; that stretch reads SIKSRKERER…LTMAIPNNSK (221 aa). The Histidine kinase domain occupies 186–369; it reads DLHDTLGQKL…KLTMAIPNNS (184 aa). His188 carries the post-translational modification Phosphohistidine; by autocatalysis.

The protein resides in the cell membrane. It carries out the reaction ATP + protein L-histidine = ADP + protein N-phospho-L-histidine.. In terms of biological role, member of the two-component regulatory system DesR/DesK, responsible for cold induction of the des gene coding for the Delta5 acyl-lipid desaturase. Acts as a sensor of the membrane fluidity. Probably activates DesR by phosphorylation. This is Sensor histidine kinase DesK (desK) from Bacillus subtilis (strain 168).